We begin with the raw amino-acid sequence, 239 residues long: uncharacterized protein (239 aa).

A disordered region spans residues 193–214; sequence RKRKLNLSDGENKAKSPYSSIS.

It localises to the nucleus. This is an uncharacterized protein from Schizosaccharomyces pombe (strain 972 / ATCC 24843) (Fission yeast).